The chain runs to 117 residues: UPF0102 protein Swoo_0351 (117 aa).

This sequence belongs to the UPF0102 family.

The sequence is that of UPF0102 protein Swoo_0351 from Shewanella woodyi (strain ATCC 51908 / MS32).